We begin with the raw amino-acid sequence, 62 residues long: Large ribosomal subunit protein bL28 (62 aa).

It belongs to the bacterial ribosomal protein bL28 family.

The polypeptide is Large ribosomal subunit protein bL28 (Streptococcus gordonii (strain Challis / ATCC 35105 / BCRC 15272 / CH1 / DL1 / V288)).